The chain runs to 189 residues: MDHTDDRKMYGTTILSIRRGNSVIVAGDGQVTLGSTIMKTSARKIKRLASNTVITGFAGATADAFTLFERLEGKLEKHPGQLMRACVELAKDWRQDKYLRRLEAMMIVADKSVSLVISGGGDVLEPENGIAAIGSGGNLALAAARALCAAQDEFAPAMPLEYIVAKSMAIAAEICIYTNNNIVMEKIEG.

Threonine 12 is an active-site residue. Na(+) is bound by residues alanine 172, cysteine 175, and threonine 178.

This sequence belongs to the peptidase T1B family. HslV subfamily. As to quaternary structure, a double ring-shaped homohexamer of HslV is capped on each side by a ring-shaped HslU homohexamer. The assembly of the HslU/HslV complex is dependent on binding of ATP.

It localises to the cytoplasm. The enzyme catalyses ATP-dependent cleavage of peptide bonds with broad specificity.. With respect to regulation, allosterically activated by HslU binding. Its function is as follows. Protease subunit of a proteasome-like degradation complex believed to be a general protein degrading machinery. The chain is ATP-dependent protease subunit HslV from Anaplasma phagocytophilum (strain HZ).